The sequence spans 367 residues: DNA replication and repair protein RecF (367 aa).

30–37 serves as a coordination point for ATP; it reads GANGSGKT.

It belongs to the RecF family.

The protein localises to the cytoplasm. The RecF protein is involved in DNA metabolism; it is required for DNA replication and normal SOS inducibility. RecF binds preferentially to single-stranded, linear DNA. It also seems to bind ATP. The polypeptide is DNA replication and repair protein RecF (Pseudomonas putida (strain GB-1)).